A 129-amino-acid chain; its full sequence is Thylakoid-associated single-stranded DNA-binding protein slr1034 (129 aa).

Positions 1–100 (MNSFVLMATV…LTASRISLVD (100 aa)) constitute an SSB domain. A disordered region spans residues 99–129 (VDSGNGINPGELSSPPEPEAVDLSNTDDIPF).

Homotetramer.

Its subcellular location is the cellular thylakoid membrane. The sequence is that of Thylakoid-associated single-stranded DNA-binding protein slr1034 from Synechocystis sp. (strain ATCC 27184 / PCC 6803 / Kazusa).